A 391-amino-acid polypeptide reads, in one-letter code: Beta sliding clamp (391 aa).

Belongs to the beta sliding clamp family. In terms of assembly, forms a ring-shaped head-to-tail homodimer around DNA which binds and tethers DNA polymerases and other proteins to the DNA. The DNA replisome complex has a single clamp-loading complex (3 tau and 1 each of delta, delta', psi and chi subunits) which binds 3 Pol III cores (1 core on the leading strand and 2 on the lagging strand) each with a beta sliding clamp dimer. Additional proteins in the replisome are other copies of gamma, psi and chi, Ssb, DNA helicase and RNA primase.

It is found in the cytoplasm. In terms of biological role, confers DNA tethering and processivity to DNA polymerases and other proteins. Acts as a clamp, forming a ring around DNA (a reaction catalyzed by the clamp-loading complex) which diffuses in an ATP-independent manner freely and bidirectionally along dsDNA. Initially characterized for its ability to contact the catalytic subunit of DNA polymerase III (Pol III), a complex, multichain enzyme responsible for most of the replicative synthesis in bacteria; Pol III exhibits 3'-5' exonuclease proofreading activity. The beta chain is required for initiation of replication as well as for processivity of DNA replication. This is Beta sliding clamp (dnaN) from Synechocystis sp. (strain ATCC 27184 / PCC 6803 / Kazusa).